The sequence spans 2104 residues: Transmembrane matrix receptor MUP-4 (2104 aa).

Residues 1-15 (MRWVPLVLLPLIASA) form the signal peptide. Topologically, residues 16–1860 (ATTYQHRQTY…FCETAPSNLP (1845 aa)) are extracellular. EGF-like domains follow at residues 71–110 (VVNE…TSPD), 122–163 (TTNE…VSTS), and 175–213 (SVNE…ASPN). 6 disulfides stabilise this stretch: C75/C89, C83/C98, C126/C142, C136/C151, C179/C192, and C186/C201. The WR1 domain maps to 220–265 (RVCNKPKAPEYYGQQSRQPQCSEGSGCGPNEECRFNTAGEKVCQCR). 3 EGF-like domains span residues 278–315 (VFSQ…VSPD), 327–360 (VRNE…SNCI), and 377–416 (AANQ…VSSN). Disulfide bonds link C282-C294, C288-C303, C331-C344, C338-C353, C355-C359, C381-C395, and C389-C404. In terms of domain architecture, VWFA spans 437 to 612 (DLVFLIDGSG…DLNTRLRSAI (176 aa)). N-linked (GlcNAc...) asparagine glycosylation is found at N494 and N556. 2 consecutive EGF-like domains span residues 728 to 772 (SNDE…NKCE) and 819 to 857 (LIDE…KSPE). 21 disulfides stabilise this stretch: C732/C746, C740/C756, C758/C771, C823/C836, C830/C845, C873/C886, C880/C895, C923/C937, C931/C946, C972/C985, C979/C995, C1020/C1034, C1028/C1046, C1075/C1089, C1083/C1098, C1125/C1139, C1133/C1148, C1173/C1187, C1181/C1196, C1219/C1233, and C1227/C1242. Positions 869–907 (QRNECLDGTHNCSMNADCIDLPDGFLCRCKEDFVDISPN) constitute an EGF-like 9; calcium-binding domain. N879 is a glycosylation site (N-linked (GlcNAc...) asparagine). 7 EGF-like domains span residues 919–958 (LVNE…HDEL), 968–1007 (LNQI…KSPL), 1016–1058 (VEPI…VGAV), 1071–1110 (LVNE…ESPV), 1121–1160 (LVNE…QKPE), 1169–1208 (IINE…EMPS), and 1215–1254 (RFDE…EISD). Residue N1037 is glycosylated (N-linked (GlcNAc...) asparagine). N1132 carries N-linked (GlcNAc...) asparagine glycosylation. N-linked (GlcNAc...) asparagine glycans are attached at residues N1271, N1403, and N1576. SEA domains lie at 1322 to 1444 (PTTS…DDAD) and 1495 to 1620 (AVES…PEQL). EGF-like domains are found at residues 1622-1658 (PFSN…LNPS), 1669-1705 (GVNE…YVNS), and 1717-1754 (SIDY…LRKS). Intrachain disulfides connect C1626–C1637, C1631–C1646, C1673–C1687, C1681–C1696, C1721–C1733, C1727–C1742, C1776–C1789, C1783–C1798, C1821–C1830, C1824–C1841, and C1843–C1852. Residues N1730 and N1782 are each glycosylated (N-linked (GlcNAc...) asparagine). Residues 1772–1810 (DIDECALGLHNCSAAAICIDKKIGYECQCQEGYEDGNPS) form the EGF-like 20; calcium-binding domain. Residues 1817–1853 (AASLCGLCNGHGDCIHDALSSNVTCACLDGYTGQFCE) enclose the EGF-like 21 domain. N-linked (GlcNAc...) asparagine glycosylation is present at N1838. The helical transmembrane segment at 1861-1881 (LILMTLLALLFLLLTLLCCLY) threads the bilayer. The Cytoplasmic segment spans residues 1882–2104 (MCARCRCFGA…TTKAEEVNYF (223 aa)). Residues 2031 to 2040 (SGAMMSSASG) are compositionally biased toward low complexity. The disordered stretch occupies residues 2031 to 2104 (SGAMMSSASG…TTKAEEVNYF (74 aa)). 2 stretches are compositionally biased toward basic and acidic residues: residues 2062–2076 (VYDR…HDFE) and 2083–2104 (TGTE…VNYF).

As to expression, abundant at hypodermal cell-matrix junctions overlying muscle of threefold embryos. Expression continues in body wall muscle in larvae and adults and is also detected in other regions where cells show mechanical attachment to the hypodermis including the inner surface of the pharynx, overlying anal and intestinal muscles, overlying vulval and uterine sex muscles, male tail muscle attachment zones and the six mechanosensory neurons (at protein level).

It localises to the cell junction. The protein localises to the hemidesmosome. Its subcellular location is the cytoplasm. The protein resides in the cytoskeleton. It is found in the cell membrane. Required for junctional attachments between hypodermis and muscle, and between the apical epithelial surface and the cuticular matrix. Essential for enclosure of the embryo by the hypodermis, hypodermal integrity, embryo elongation, and maintenance of hypodermal morphology in fully elongated embryos. The sequence is that of Transmembrane matrix receptor MUP-4 from Caenorhabditis elegans.